A 195-amino-acid chain; its full sequence is Thymidylate kinase (195 aa).

7-14 (GVDTCGKS) is an ATP binding site.

Belongs to the thymidylate kinase family.

The enzyme catalyses dTMP + ATP = dTDP + ADP. Phosphorylation of dTMP to form dTDP in both de novo and salvage pathways of dTTP synthesis. This chain is Thymidylate kinase, found in Helicobacter hepaticus (strain ATCC 51449 / 3B1).